Reading from the N-terminus, the 267-residue chain is Thiamine pyrophosphokinase 2 (267 aa).

Belongs to the thiamine pyrophosphokinase family.

Its subcellular location is the cytoplasm. The protein resides in the cytosol. The enzyme catalyses thiamine + ATP = thiamine diphosphate + AMP + H(+). It functions in the pathway cofactor biosynthesis; thiamine diphosphate biosynthesis; thiamine diphosphate from thiamine: step 1/1. In terms of biological role, catalyzes the phosphorylation of thiamine to thiamine pyrophosphate (TPP). TPP is an active cofactor for enzymes involved in glycolysis and energy production. Plant leaves require high levels of TPP for photosynthesis and carbohydrate metabolism. This Oryza sativa subsp. japonica (Rice) protein is Thiamine pyrophosphokinase 2 (TPK2).